The following is a 490-amino-acid chain: Beta-N-acetyl-D-glucosaminide beta-1,4-N-acetylglucosaminyl-transferase (490 aa).

Over 1–30 the chain is Cytoplasmic; the sequence is MYLVVCWGRVTGNMISTRHCFSRCKSRSVR. Residues 31–50 form a helical; Signal-anchor for type II membrane protein membrane-spanning segment; it reads VIKATAMLFVAAMLFLALHM. N-linked (GlcNAc...) asparagine glycans are attached at residues asparagine 51, asparagine 82, asparagine 441, asparagine 459, and asparagine 485. Residues 51–490 lie on the Lumenal side of the membrane; the sequence is NFSHEASQQN…YLTGNFTIIS (440 aa).

It belongs to the glycosyltransferase 7 family.

The protein localises to the golgi apparatus membrane. It carries out the reaction an N-acetyl-beta-D-glucosaminyl derivative + UDP-N-acetyl-alpha-D-glucosamine = an N-acetyl-beta-D-glucosaminyl-(1-&gt;4)-N-acetyl-beta-D-glucosaminyl derivative + UDP + H(+). It participates in protein modification; protein glycosylation. The sequence is that of Beta-N-acetyl-D-glucosaminide beta-1,4-N-acetylglucosaminyl-transferase (GNT) from Lymnaea stagnalis (Great pond snail).